The following is a 472-amino-acid chain: 3-isopropylmalate dehydratase large subunit (472 aa).

3 residues coordinate [4Fe-4S] cluster: cysteine 353, cysteine 414, and cysteine 417.

The protein belongs to the aconitase/IPM isomerase family. LeuC type 1 subfamily. Heterodimer of LeuC and LeuD. The cofactor is [4Fe-4S] cluster.

The enzyme catalyses (2R,3S)-3-isopropylmalate = (2S)-2-isopropylmalate. Its pathway is amino-acid biosynthesis; L-leucine biosynthesis; L-leucine from 3-methyl-2-oxobutanoate: step 2/4. Functionally, catalyzes the isomerization between 2-isopropylmalate and 3-isopropylmalate, via the formation of 2-isopropylmaleate. This Acinetobacter baumannii (strain AB0057) protein is 3-isopropylmalate dehydratase large subunit.